The chain runs to 191 residues: Pyridoxal 5'-phosphate synthase subunit PdxT (191 aa).

46–48 (GES) is a binding site for L-glutamine. Catalysis depends on C78, which acts as the Nucleophile. L-glutamine is bound by residues R105 and 134 to 135 (IR). Catalysis depends on charge relay system residues H170 and E172.

It belongs to the glutaminase PdxT/SNO family. In the presence of PdxS, forms a dodecamer of heterodimers. Only shows activity in the heterodimer.

It carries out the reaction aldehydo-D-ribose 5-phosphate + D-glyceraldehyde 3-phosphate + L-glutamine = pyridoxal 5'-phosphate + L-glutamate + phosphate + 3 H2O + H(+). The enzyme catalyses L-glutamine + H2O = L-glutamate + NH4(+). It functions in the pathway cofactor biosynthesis; pyridoxal 5'-phosphate biosynthesis. Catalyzes the hydrolysis of glutamine to glutamate and ammonia as part of the biosynthesis of pyridoxal 5'-phosphate. The resulting ammonia molecule is channeled to the active site of PdxS. The polypeptide is Pyridoxal 5'-phosphate synthase subunit PdxT (Carboxydothermus hydrogenoformans (strain ATCC BAA-161 / DSM 6008 / Z-2901)).